A 506-amino-acid chain; its full sequence is Anaerobic nitric oxide reductase transcription regulator NorR (506 aa).

D57 is modified (4-aspartylphosphate). Positions M187–V416 constitute a Sigma-54 factor interaction domain. ATP is bound by residues G215–E222 and A278–E287. Positions W481–K500 form a DNA-binding region, H-T-H motif.

The protein operates within nitrogen metabolism; nitric oxide reduction. Required for the expression of anaerobic nitric oxide (NO) reductase, acts as a transcriptional activator for at least the norVW operon. Activation also requires sigma-54. This chain is Anaerobic nitric oxide reductase transcription regulator NorR, found in Salmonella schwarzengrund (strain CVM19633).